Reading from the N-terminus, the 146-residue chain is D-aminoacyl-tRNA deacylase (146 aa).

The short motif at 138–139 (GP) is the Gly-cisPro motif, important for rejection of L-amino acids element.

The protein belongs to the DTD family. As to quaternary structure, homodimer.

It is found in the cytoplasm. The enzyme catalyses glycyl-tRNA(Ala) + H2O = tRNA(Ala) + glycine + H(+). It carries out the reaction a D-aminoacyl-tRNA + H2O = a tRNA + a D-alpha-amino acid + H(+). An aminoacyl-tRNA editing enzyme that deacylates mischarged D-aminoacyl-tRNAs. Also deacylates mischarged glycyl-tRNA(Ala), protecting cells against glycine mischarging by AlaRS. Acts via tRNA-based rather than protein-based catalysis; rejects L-amino acids rather than detecting D-amino acids in the active site. By recycling D-aminoacyl-tRNA to D-amino acids and free tRNA molecules, this enzyme counteracts the toxicity associated with the formation of D-aminoacyl-tRNA entities in vivo and helps enforce protein L-homochirality. This is D-aminoacyl-tRNA deacylase from Stenotrophomonas maltophilia (strain R551-3).